We begin with the raw amino-acid sequence, 375 residues long: Oleosin-B6 (375 aa).

Residues 1–32 (MKEEIQNETAQTQLQREGRMFSFLFPVIEVIK) form a polar region. 3 consecutive transmembrane segments (helical) span residues 21–43 (FSFLFPVIEVIKVVMASVASVVF), 55–75 (AVALAVSTPLFIIFSPILVPA), and 81–101 (LLATGLGAGTTLGVTGMGLLM). The interval 33–112 (VVMASVASVV…LIKHPGKEGA (80 aa)) is hydrophobic. 2 disordered regions span residues 144–284 (PGVG…SFLS) and 303–375 (IPGF…DESS). Basic and acidic residues predominate over residues 148 to 179 (KKSEGRGESKGKKGKKGKSEHGRGKHEGEGKS). The segment covering 193-210 (NNPPPAGAPPTGSPPAAP) has biased composition (pro residues). A run of 23 repeats spans residues 207 to 209 (PAA), 210 to 212 (PAA), 213 to 215 (PEA), 216 to 218 (PAA), 219 to 221 (PAA), 222 to 224 (PAA), 225 to 227 (PAA), 228 to 230 (PAA), 231 to 233 (PAA), 234 to 236 (PAA), 237 to 239 (PED), 240 to 242 (PAA), 243 to 245 (PAA), 246 to 248 (PEA), 249 to 251 (PAT), 252 to 254 (PAA), 255 to 257 (PPA), 258 to 260 (PAA), 261 to 263 (APA), 264 to 266 (PAA), 267 to 269 (PAA), 270 to 272 (PPA), and 273 to 275 (PAA). A 23 X 3 AA approximate tandem repeats of P-A-A region spans residues 207–275 (PAAPAAPEAP…APAAPPAPAA (69 aa)). Positions 211-251 (AAPEAPAAPAAPAAPAAPAAPAAPAAPEDPAAPAAPEAPAT) are enriched in low complexity. Pro residues predominate over residues 252 to 280 (PAAPPAPAAAPAPAAPAAPPAPAAPPRPP). Residues 316–331 (SKGGKKSKGKGKSNGR) show a composition bias toward basic residues.

The protein belongs to the oleosin family. In terms of tissue distribution, the full-length protein is found in the tapetal lipid bodies of immature anthers, the proteolytically cleaved C-terminal product is found on the coats of pollen grains. Not found in flowers, developing embryos or leaf tissue.

It localises to the lipid droplet. The protein localises to the membrane. In terms of biological role, many of the major pollen coat proteins are derived from endoproteolytic cleavage of oleosin-like proteins. The protein is Oleosin-B6 of Brassica napus (Rape).